The chain runs to 197 residues: Presequence translocated-associated motor subunit PAM17, mitochondrial (197 aa).

A mitochondrion-targeting transit peptide spans Met-1 to Phe-14. The next 2 helical transmembrane spans lie at Ile-64–Leu-84 and Val-103–Gly-123.

It belongs to the PAM17 family. In terms of assembly, component of the PAM complex, at least composed of mtHsp70, MGE1, TIM44, PAM16, PAM17 and PAM18/TIM14.

It localises to the mitochondrion inner membrane. Functionally, component of the PAM complex, a complex required for the translocation of transit peptide-containing proteins from the inner membrane into the mitochondrial matrix in an ATP-dependent manner. In the complex, it is required to organize PAM16-PAM18 (TIM16-TIM14) heterodimer. The polypeptide is Presequence translocated-associated motor subunit PAM17, mitochondrial (PAM17) (Saccharomyces cerevisiae (strain ATCC 204508 / S288c) (Baker's yeast)).